The following is a 212-amino-acid chain: ATP-dependent Clp protease proteolytic subunit (212 aa).

The Nucleophile role is filled by S106. Residue H131 is part of the active site.

It belongs to the peptidase S14 family. In terms of assembly, fourteen ClpP subunits assemble into 2 heptameric rings which stack back to back to give a disk-like structure with a central cavity, resembling the structure of eukaryotic proteasomes.

Its subcellular location is the cytoplasm. The enzyme catalyses Hydrolysis of proteins to small peptides in the presence of ATP and magnesium. alpha-casein is the usual test substrate. In the absence of ATP, only oligopeptides shorter than five residues are hydrolyzed (such as succinyl-Leu-Tyr-|-NHMec, and Leu-Tyr-Leu-|-Tyr-Trp, in which cleavage of the -Tyr-|-Leu- and -Tyr-|-Trp bonds also occurs).. Functionally, cleaves peptides in various proteins in a process that requires ATP hydrolysis. Has a chymotrypsin-like activity. Plays a major role in the degradation of misfolded proteins. In Rhodopseudomonas palustris (strain ATCC BAA-98 / CGA009), this protein is ATP-dependent Clp protease proteolytic subunit.